The primary structure comprises 576 residues: Alpha-1,3-arabinosyltransferase XAT3 (576 aa).

Residues methionine 1–arginine 19 lie on the Cytoplasmic side of the membrane. Residues phenylalanine 20 to serine 40 form a helical; Signal-anchor for type II membrane protein membrane-spanning segment. The Lumenal portion of the chain corresponds to lysine 41–proline 576. The tract at residues isoleucine 64 to serine 171 is disordered. 3 stretches are compositionally biased toward basic and acidic residues: residues glycine 73–proline 98, threonine 126–glutamine 138, and glycine 147–histidine 163. N-linked (GlcNAc...) asparagine glycans are attached at residues asparagine 172, asparagine 375, and asparagine 443.

The protein belongs to the glycosyltransferase 61 family.

It is found in the golgi apparatus membrane. Its pathway is glycan metabolism. Glycosyltransferase involved in the arabinosylation of xylan, the major hemicellulose (non-cellulosic component) of primary and secondary walls of angiosperms. Possesses alpha-1,3-arabinosyltransferase activity, transferring an arabinofuranose residue to the xylan backbone. This chain is Alpha-1,3-arabinosyltransferase XAT3, found in Oryza sativa subsp. japonica (Rice).